Here is a 732-residue protein sequence, read N- to C-terminus: X-ray repair cross-complementing protein 5 (732 aa).

A VWFA domain is found at 9–231 (AVVLCMDVGF…DEIYSFSESL (223 aa)). The tract at residues 138-165 (LSSRFSKSQLDIIIHSLKKCDISLQFFL) is leucine-zipper. The residue at position 144 (Lys144) is an N6-acetyllysine. Residue Lys195 forms a Glycyl lysine isopeptide (Lys-Gly) (interchain with G-Cter in SUMO2) linkage. In terms of domain architecture, Ku spans 253-452 (IGSNLSIRIA…KYAPTEAQLN (200 aa)). Residues Ser255 and Ser258 each carry the phosphoserine modification. The residue at position 265 (Lys265) is an N6-acetyllysine. At Ser318 the chain carries Phosphoserine. At Lys332 the chain carries N6-acetyllysine. Glycyl lysine isopeptide (Lys-Gly) (interchain with G-Cter in SUMO2) cross-links involve residues Lys532 and Lys534. Thr535 is subject to Phosphothreonine. Glycyl lysine isopeptide (Lys-Gly) (interchain with G-Cter in SUMO2) cross-links involve residues Lys566 and Lys568. Residues Ser577, Ser579, and Ser580 each carry the phosphoserine; by PRKDC modification. N6-acetyllysine is present on residues Lys660 and Lys665. Residues Lys669 and Lys688 each participate in a glycyl lysine isopeptide (Lys-Gly) (interchain with G-Cter in SUMO2) cross-link. The residue at position 715 (Thr715) is a Phosphothreonine; by PRKDC. The short motif at 720-728 (EEGGDVDDL) is the EEXXXDL motif element.

Belongs to the ku80 family. Heterodimer composed of XRCC5/Ku80 and XRCC6/Ku70; heterodimerization stabilizes XRCC5 protein. Component of the core long-range non-homologous end joining (NHEJ) complex (also named DNA-PK complex) composed of PRKDC, LIG4, XRCC4, XRCC6/Ku70, XRCC5/Ku86 and NHEJ1/XLF. Additional component of the NHEJ complex includes PAXX. Following autophosphorylation, PRKDC dissociates from DNA, leading to formation of the short-range NHEJ complex, composed of LIG4, XRCC4, XRCC6/Ku70, XRCC5/Ku86 and NHEJ1/XLF. The XRCC5-XRCC6 dimer also associates with NAA15, and this complex displays DNA binding activity towards the osteocalcin FGF response element (OCFRE). In addition, XRCC5 binds to the osteoblast-specific transcription factors MSX2 and RUNX2. Interacts with ELF3. Interacts with APLF (via KBM motif). The XRCC5/XRCC6 dimer associates in a DNA-dependent manner with APEX1. Identified in a complex with DEAF1 and XRCC6. Interacts with NR4A3; the DNA-dependent protein kinase complex DNA-PK phosphorylates and activates NR4A3 and prevents NR4A3 ubiquitinylation and degradation. Interacts with RNF138. Interacts with CYREN isoform 1 (CYREN-1) and isoform 4 (CYREN-2) (via KBM motif). Interacts with WRN (via KBM motif). Interacts (via N-terminus) with HSF1 (via N-terminus); this interaction is direct and prevents XRCC5/XRCC6 heterodimeric binding and non-homologous end joining (NHEJ) repair activities induced by ionizing radiation (IR). Interacts with DHX9; this interaction occurs in a RNA-dependent manner. Part of the HDP-RNP complex composed of at least HEXIM1, PRKDC, XRCC5, XRCC6, paraspeckle proteins (SFPQ, NONO, PSPC1, RBM14, and MATR3) and NEAT1 RNA. Interacts with ERCC6. The XRCC5-XRCC6 dimer associates with ALKBH2. Interacts with TPRN; TPRN interacts with a number of DNA damage response proteins, is recruited to sites of DNA damage and may play a role in DNA damage repair. Interacts with ERCC6L2. In terms of assembly, (Microbial infection) Interacts with human T-cell leukemia virus 1/HTLV-1 protein HBZ. In terms of processing, ADP-ribosylated by PARP3. Phosphorylated on serine residues. Phosphorylation by PRKDC may enhance helicase activity. Post-translationally, sumoylated. In terms of processing, ubiquitinated by RNF8 via 'Lys-48'-linked ubiquitination following DNA damage, leading to its degradation and removal from DNA damage sites. Ubiquitinated by RNF138, leading to remove the Ku complex from DNA breaks.

It is found in the nucleus. It localises to the nucleolus. Its subcellular location is the chromosome. In terms of biological role, single-stranded DNA-dependent ATP-dependent helicase that plays a key role in DNA non-homologous end joining (NHEJ) by recruiting DNA-PK to DNA. Required for double-strand break repair and V(D)J recombination. Also has a role in chromosome translocation. The DNA helicase II complex binds preferentially to fork-like ends of double-stranded DNA in a cell cycle-dependent manner. It works in the 3'-5' direction. During NHEJ, the XRCC5-XRRC6 dimer performs the recognition step: it recognizes and binds to the broken ends of the DNA and protects them from further resection. Binding to DNA may be mediated by XRCC6. The XRCC5-XRRC6 dimer acts as a regulatory subunit of the DNA-dependent protein kinase complex DNA-PK by increasing the affinity of the catalytic subunit PRKDC to DNA by 100-fold. The XRCC5-XRRC6 dimer is probably involved in stabilizing broken DNA ends and bringing them together. The assembly of the DNA-PK complex to DNA ends is required for the NHEJ ligation step. The XRCC5-XRRC6 dimer probably also acts as a 5'-deoxyribose-5-phosphate lyase (5'-dRP lyase), by catalyzing the beta-elimination of the 5' deoxyribose-5-phosphate at an abasic site near double-strand breaks. XRCC5 probably acts as the catalytic subunit of 5'-dRP activity, and allows to 'clean' the termini of abasic sites, a class of nucleotide damage commonly associated with strand breaks, before such broken ends can be joined. The XRCC5-XRRC6 dimer together with APEX1 acts as a negative regulator of transcription. In association with NAA15, the XRCC5-XRRC6 dimer binds to the osteocalcin promoter and activates osteocalcin expression. As part of the DNA-PK complex, involved in the early steps of ribosome assembly by promoting the processing of precursor rRNA into mature 18S rRNA in the small-subunit processome. Binding to U3 small nucleolar RNA, recruits PRKDC and XRCC5/Ku86 to the small-subunit processome. Plays a role in the regulation of DNA virus-mediated innate immune response by assembling into the HDP-RNP complex, a complex that serves as a platform for IRF3 phosphorylation and subsequent innate immune response activation through the cGAS-STING pathway. The sequence is that of X-ray repair cross-complementing protein 5 (XRCC5) from Homo sapiens (Human).